Here is a 129-residue protein sequence, read N- to C-terminus: Small ribosomal subunit protein uS8c (129 aa).

The protein belongs to the universal ribosomal protein uS8 family. As to quaternary structure, part of the 30S ribosomal subunit.

It localises to the plastid. Its subcellular location is the chloroplast. In terms of biological role, one of the primary rRNA binding proteins, it binds directly to 16S rRNA central domain where it helps coordinate assembly of the platform of the 30S subunit. This chain is Small ribosomal subunit protein uS8c (rps8), found in Nephroselmis olivacea (Green alga).